Here is a 200-residue protein sequence, read N- to C-terminus: Oligoribonuclease (200 aa).

Residues 5-169 (MVWIDCEMTG…ADIRESIAEL (165 aa)) enclose the Exonuclease domain. Residue Y126 is part of the active site.

The protein belongs to the oligoribonuclease family.

The protein resides in the cytoplasm. In terms of biological role, 3'-to-5' exoribonuclease specific for small oligoribonucleotides. The chain is Oligoribonuclease from Streptomyces avermitilis (strain ATCC 31267 / DSM 46492 / JCM 5070 / NBRC 14893 / NCIMB 12804 / NRRL 8165 / MA-4680).